The primary structure comprises 176 residues: Protein GrpE (176 aa).

Belongs to the GrpE family. As to quaternary structure, homodimer.

Its subcellular location is the cytoplasm. Participates actively in the response to hyperosmotic and heat shock by preventing the aggregation of stress-denatured proteins, in association with DnaK and GrpE. It is the nucleotide exchange factor for DnaK and may function as a thermosensor. Unfolded proteins bind initially to DnaJ; upon interaction with the DnaJ-bound protein, DnaK hydrolyzes its bound ATP, resulting in the formation of a stable complex. GrpE releases ADP from DnaK; ATP binding to DnaK triggers the release of the substrate protein, thus completing the reaction cycle. Several rounds of ATP-dependent interactions between DnaJ, DnaK and GrpE are required for fully efficient folding. The sequence is that of Protein GrpE from Thermoplasma volcanium (strain ATCC 51530 / DSM 4299 / JCM 9571 / NBRC 15438 / GSS1).